The sequence spans 760 residues: Amyloid beta precursor protein binding family B member 2 (760 aa).

Phosphoserine occurs at positions 123 and 160. Disordered stretches follow at residues 177 to 295 (QNLG…LPPG) and 324 to 351 (PADL…KQPW). 2 stretches are compositionally biased toward polar residues: residues 212–230 (NKPQ…SSSP) and 261–275 (SWTT…PSSP). Residues 290–322 (PDLPPGWKRVNDIAGTYYWHIPTGTTQWERPVS) form the WW domain. Phosphoserine occurs at positions 334, 409, and 412. 2 PID domains span residues 413–580 (DPEA…LQVD) and 586–738 (TELV…VTTN).

In terms of assembly, interacts (via C-terminus) with APP (via C-terminus). Interacts with APLP2 (via cytoplasmic domain). Expressed in the brain, retinal lens and muscle cells (at protein level).

It localises to the endoplasmic reticulum. It is found in the golgi apparatus. Its subcellular location is the early endosome. Functionally, plays a role in the maintenance of lens transparency, and may also play a role in muscle cell strength. Involved in hippocampal neurite branching and neuromuscular junction formation, as a result plays a role in spatial memory functioning. Activates transcription of APP. The polypeptide is Amyloid beta precursor protein binding family B member 2 (Mus musculus (Mouse)).